A 161-amino-acid polypeptide reads, in one-letter code: MNSNNCNTNMNMNNNNNMNNNNNPNMNNNICQSNNMNNQYRNNNMNNFSNTHNNNNNNNNNNTIQNFNDNSLKKRRFEDDSHQNFNDNGFNNNNNNNNSNMNHNFSNQNNYNNNNNNNNNNNSNFNGIVFKSKKGTSSQVGNNKKKQFNNNLEISDWNKLS.

Disordered regions lie at residues 1–67 (MNSN…IQNF) and 80–147 (DSHQ…KKKQ). The segment covering 84 to 126 (NFNDNGFNNNNNNNNSNMNHNFSNQNNYNNNNNNNNNNNSNFN) has biased composition (low complexity). The segment covering 135–147 (GTSSQVGNNKKKQ) has biased composition (polar residues).

This is an uncharacterized protein from Dictyostelium discoideum (Social amoeba).